A 127-amino-acid chain; its full sequence is Small ribosomal subunit protein uS13 (127 aa).

A disordered region spans residues 97 to 127; that stretch reads PVRGQRTKTNARTRKGPRKTVAGKKGVKDLR. The segment covering 101-118 has biased composition (basic residues); sequence QRTKTNARTRKGPRKTVA.

It belongs to the universal ribosomal protein uS13 family. In terms of assembly, part of the 30S ribosomal subunit. Forms a loose heterodimer with protein S19. Forms two bridges to the 50S subunit in the 70S ribosome.

Functionally, located at the top of the head of the 30S subunit, it contacts several helices of the 16S rRNA. In the 70S ribosome it contacts the 23S rRNA (bridge B1a) and protein L5 of the 50S subunit (bridge B1b), connecting the 2 subunits; these bridges are implicated in subunit movement. Contacts the tRNAs in the A and P-sites. The sequence is that of Small ribosomal subunit protein uS13 from Rhodopirellula baltica (strain DSM 10527 / NCIMB 13988 / SH1).